Reading from the N-terminus, the 801-residue chain is Palmitoyl thioesterase CPT1C (801 aa).

Residues 1–49 (MAEAHQASSLLSSLSSDGAEVELSSSVWQEIYLSALRSWKRNLWRVWND) are Cytoplasmic-facing. A helical transmembrane segment spans residues 50–70 (FLAGVVPATPLSWLFLFSTIQ). The Mitochondrial intermembrane portion of the chain corresponds to 71–103 (LACLLQLDPSLGLMEKIKELLPDWGGQHHQLQG). Residues 104–124 (LLAAAVFASCLWGTLIFTLHV) form a helical membrane-spanning segment. Residues 125–801 (ALRLLLSHHG…PNIPKSSTNL (677 aa)) lie on the Cytoplasmic side of the membrane. The Proton acceptor role is filled by H469. Residue 551 to 563 (GKSFIKGCHVSSD) coordinates CoA. (R)-carnitine-binding residues include Y585, S587, and T598. The segment at 760-801 (LFQAGQQFKRQFTGLGESSGWKYSNLSCKTVDPNIPKSSTNL) is required for interaction with GRIA1.

It belongs to the carnitine/choline acetyltransferase family. In terms of assembly, peripherally associated with AMPAR complex. AMPAR complex consists of an inner core made of 4 pore-forming GluA/GRIA proteins (GRIA1, GRIA2, GRIA3 and GRIA4) and 4 major auxiliary subunits arranged in a twofold symmetry. One of the two pairs of distinct binding sites is occupied either by CNIH2, CNIH3 or CACNG2, CACNG3. The other harbors CACNG2, CACNG3, CACNG4, CACNG8 or GSG1L. This inner core of AMPAR complex is complemented by outer core constituents binding directly to the GluA/GRIA proteins at sites distinct from the interaction sites of the inner core constituents. Outer core constituents include at least PRRT1, PRRT2, CKAMP44/SHISA9, FRRS1L and NRN1. The proteins of the inner and outer core serve as a platform for other, more peripherally associated AMPAR constituents, including CPT1C. Alone or in combination, these auxiliary subunits control the gating and pharmacology of the AMPAR complex and profoundly impact their biogenesis and protein processing. Interacts with SACM1L; the interaction regulates SACM1L phosphatidylinositol-3-phosphatase activity and translocation to endoplasmic reticulum/trans Golgi network in a malonyl-CoA dependent manner. Interacts with ATL1. Expressed in brain (at protein level).

The protein resides in the synapse. It localises to the cell projection. It is found in the dendrite. Its subcellular location is the axon. The protein localises to the endoplasmic reticulum membrane. It catalyses the reaction S-hexadecanoyl-L-cysteinyl-[protein] + H2O = L-cysteinyl-[protein] + hexadecanoate + H(+). Its function is as follows. Palmitoyl thioesterase specifically expressed in the endoplasmic reticulum of neurons. Modulates the trafficking of the glutamate receptor, AMPAR, to plasma membrane through depalmitoylation of GRIA1. Also regulates AMPR trafficking through the regulation of SACM1L phosphatidylinositol-3-phosphatase activity by interaction in a malonyl-CoA dependent manner. Binds malonyl-CoA and couples malonyl-CoA to ceramide levels, necessary for proper spine maturation and contributing to systemic energy homeostasis and appetite control. Binds to palmitoyl-CoA, but does not have carnitine palmitoyltransferase 1 catalytic activity or at very low levels. The protein is Palmitoyl thioesterase CPT1C (Cpt1c) of Rattus norvegicus (Rat).